The following is a 106-amino-acid chain: Probable insulin-like peptide beta-type 2 (106 aa).

A signal peptide spans 1 to 15 (MNAIIFCLLFTTVTA). Positions 16–56 (TYEVFGKGIEHRNEHLIINQLDIIPVESTPTPNRASRVQKR) are excised as a propeptide. 4 disulfides stabilise this stretch: C58–C86, C70–C99, C73–C100, and C85–C90.

This sequence belongs to the insulin family.

It localises to the secreted. The sequence is that of Probable insulin-like peptide beta-type 2 (ins-2) from Caenorhabditis elegans.